The following is a 460-amino-acid chain: MNTSAPPAVSPNITVLAPGKGPWQVAFIGITTGLLSLATVTGNLLVLISFKVNTELKTVNNYFLLSLACADLIIGTFSMNLYTTYLLMGHWALGTLACDLWLALDYVASNASVMNLLLISFDRYFSVTRPLSYRAKRTPRRAALMIGLAWLVSFVLWAPAILFWQYLVGERTVLAGQCYIQFLSQPIITFGTAMAAFYLPVTVMCTLYWRIYRETENRARELAALQGSETPGKGGGSSSSSERSQPGAEGSPETPPGRCCRCCRPPRLLQAYSWKEDEEEDEGSMESLTSSEGEEPGSEVVIKMPMVDPEAQAPTKQPPRSSPNTVKRPTKKGRDRAGKGQKPRGKEQLAKRKTFSLVKEKKAARTLSAILLAFILTWTPYNIMVLVSTFCKDCVPETLWELGYWLCYVNSTINPMCYALCNKAFRDTFRLLLLCRWDKRRWRKIPKRPGSVHRTPSRQC.

The Extracellular portion of the chain corresponds to 1-22 (MNTSAPPAVSPNITVLAPGKGP). Residues asparagine 2 and asparagine 12 are each glycosylated (N-linked (GlcNAc...) asparagine). The helical transmembrane segment at 23-48 (WQVAFIGITTGLLSLATVTGNLLVLI) threads the bilayer. At 49–62 (SFKVNTELKTVNNY) the chain is on the cytoplasmic side. Residues 63 to 84 (FLLSLACADLIIGTFSMNLYTT) traverse the membrane as a helical segment. At 85-95 (YLLMGHWALGT) the chain is on the extracellular side. Residues 96–121 (LACDLWLALDYVASNASVMNLLLISF) traverse the membrane as a helical segment. A disulfide bridge links cysteine 98 with cysteine 178. Over 122-142 (DRYFSVTRPLSYRAKRTPRRA) the chain is Cytoplasmic. A helical transmembrane segment spans residues 143–164 (ALMIGLAWLVSFVLWAPAILFW). At 165–185 (QYLVGERTVLAGQCYIQFLSQ) the chain is on the extracellular side. The chain crosses the membrane as a helical span at residues 186–209 (PIITFGTAMAAFYLPVTVMCTLYW). Residues 210–366 (RIYRETENRA…LVKEKKAART (157 aa)) lie on the Cytoplasmic side of the membrane. Disordered regions lie at residues 225–259 (LQGSETPGKGGGSSSSSERSQPGAEGSPETPPGRC), 273–297 (SWKEDEEEDEGSMESLTSSEGEEPG), and 310–351 (EAQA…QLAK). Threonine 230 carries the post-translational modification Phosphothreonine. Over residues 238 to 247 (SSSSERSQPG) the composition is skewed to low complexity. The span at 328 to 343 (RPTKKGRDRAGKGQKP) shows a compositional bias: basic residues. A helical membrane pass occupies residues 367–390 (LSAILLAFILTWTPYNIMVLVSTF). Topologically, residues 391 to 401 (CKDCVPETLWE) are extracellular. A helical transmembrane segment spans residues 402–420 (LGYWLCYVNSTINPMCYAL). Over 421-460 (CNKAFRDTFRLLLLCRWDKRRWRKIPKRPGSVHRTPSRQC) the chain is Cytoplasmic. Threonine 428 carries the post-translational modification Phosphothreonine. Residue serine 451 is modified to Phosphoserine. Threonine 455 carries the post-translational modification Phosphothreonine. At serine 457 the chain carries Phosphoserine.

Belongs to the G-protein coupled receptor 1 family. Muscarinic acetylcholine receptor subfamily. CHRM1 sub-subfamily. In terms of assembly, interacts with GPRASP2. Interacts with TMEM147.

The protein localises to the cell membrane. It localises to the postsynaptic cell membrane. The muscarinic acetylcholine receptor mediates various cellular responses, including inhibition of adenylate cyclase, breakdown of phosphoinositides and modulation of potassium channels through the action of G proteins. Primary transducing effect is Pi turnover. This chain is Muscarinic acetylcholine receptor M1 (CHRM1), found in Macaca mulatta (Rhesus macaque).